The following is a 211-amino-acid chain: Claudin-7 (211 aa).

Over 1–7 (MANSGLQ) the chain is Cytoplasmic. A helical membrane pass occupies residues 8–28 (LLGFSMALLGWVGLVACTAIP). Topologically, residues 29 to 81 (QWQMSSYAGDNIITAQAMYKGLWMDCVTQSTGMMSCKMYDSVLALSAALQATR) are extracellular. The chain crosses the membrane as a helical span at residues 82–102 (ALMVVSLVLGFLAMFVATMGM). Over 103–117 (KCTRCGGDDKVKKAR) the chain is Cytoplasmic. Residues 118 to 138 (IAMGGGIIFIVAGLAALVACS) form a helical membrane-spanning segment. Residues 139–160 (WYGHQIVTDFYNPLIPTNIKYE) lie on the Extracellular side of the membrane. A helical membrane pass occupies residues 161-181 (FGPAIFIGWAGSALVILGGAL). The Cytoplasmic segment spans residues 182-211 (LSCSCPGNESKAGYRVPRSYPKSNSSKEYV). Positions 210–211 (YV) are interactions with TJP1, TJP2 and TJP3.

It belongs to the claudin family. In terms of assembly, directly interacts with TJP1/ZO-1, TJP2/ZO-2 and TJP3/ZO-3. The phosphorylated form interacts with EPCAM. Does not interact with CD81. Post-translationally, phosphorylated. As to expression, expressed in kidney, lung and prostate. Isoform 1 seems to be predominant, except in some normal prostate samples, where isoform 2 is the major form. Down-regulated in breast cancers, including ductal carcinoma in situ (DCIS), lobular carcinoma in situ (LCIS) and invasive ductal carcinoma (IDC) (at protein level), as well as in several cancer cell lines. Loss of expression correlates with histological grade, occurring predominantly in high-grade lesions.

The protein resides in the cell membrane. The protein localises to the basolateral cell membrane. It is found in the cell junction. Its subcellular location is the tight junction. Plays a major role in tight junction-specific obliteration of the intercellular space. This chain is Claudin-7 (CLDN7), found in Homo sapiens (Human).